A 243-amino-acid chain; its full sequence is UPF0246 protein spyM18_2163 (243 aa).

Belongs to the UPF0246 family.

In Streptococcus pyogenes serotype M18 (strain MGAS8232), this protein is UPF0246 protein spyM18_2163.